Reading from the N-terminus, the 315-residue chain is Ribosomal protein L11 methyltransferase (315 aa).

T162, G183, D205, and N248 together coordinate S-adenosyl-L-methionine.

It belongs to the methyltransferase superfamily. PrmA family.

The protein localises to the cytoplasm. It catalyses the reaction L-lysyl-[protein] + 3 S-adenosyl-L-methionine = N(6),N(6),N(6)-trimethyl-L-lysyl-[protein] + 3 S-adenosyl-L-homocysteine + 3 H(+). Its function is as follows. Methylates ribosomal protein L11. The polypeptide is Ribosomal protein L11 methyltransferase (Oceanobacillus iheyensis (strain DSM 14371 / CIP 107618 / JCM 11309 / KCTC 3954 / HTE831)).